A 505-amino-acid chain; its full sequence is Mannosyl-oligosaccharide alpha-1,2-mannosidase 1B (505 aa).

The signal sequence occupies residues 1-16 (MRTLLALAALAGFAAA). N-linked (GlcNAc...) asparagine glycosylation is found at Asn88 and Asn174. An intrachain disulfide couples Cys325 to Cys354. N-linked (GlcNAc...) asparagine glycosylation occurs at Asn359. Residue Glu368 is the Proton donor of the active site. Residue Thr494 coordinates Ca(2+).

It belongs to the glycosyl hydrolase 47 family. As to quaternary structure, monomer. The cofactor is Ca(2+). Mg(2+) is required as a cofactor.

It is found in the cytoplasmic vesicle lumen. It catalyses the reaction N(4)-(alpha-D-Man-(1-&gt;2)-alpha-D-Man-(1-&gt;2)-alpha-D-Man-(1-&gt;3)-[alpha-D-Man-(1-&gt;2)-alpha-D-Man-(1-&gt;3)-[alpha-D-Man-(1-&gt;2)-alpha-D-Man-(1-&gt;6)]-alpha-D-Man-(1-&gt;6)]-beta-D-Man-(1-&gt;4)-beta-D-GlcNAc-(1-&gt;4)-beta-D-GlcNAc)-L-asparaginyl-[protein] (N-glucan mannose isomer 9A1,2,3B1,2,3) + 4 H2O = N(4)-(alpha-D-Man-(1-&gt;3)-[alpha-D-Man-(1-&gt;3)-[alpha-D-Man-(1-&gt;6)]-alpha-D-Man-(1-&gt;6)]-beta-D-Man-(1-&gt;4)-beta-D-GlcNAc-(1-&gt;4)-beta-D-GlcNAc)-L-asparaginyl-[protein] (N-glucan mannose isomer 5A1,2) + 4 beta-D-mannose. The enzyme catalyses N(4)-(alpha-D-Man-(1-&gt;2)-alpha-D-Man-(1-&gt;2)-alpha-D-Man-(1-&gt;3)-[alpha-D-Man-(1-&gt;3)-[alpha-D-Man-(1-&gt;2)-alpha-D-Man-(1-&gt;6)]-alpha-D-Man-(1-&gt;6)]-beta-D-Man-(1-&gt;4)-beta-D-GlcNAc-(1-&gt;4)-beta-D-GlcNAc)-L-asparaginyl-[protein] (N-glucan mannose isomer 8A1,2,3B1,3) + 3 H2O = N(4)-(alpha-D-Man-(1-&gt;3)-[alpha-D-Man-(1-&gt;3)-[alpha-D-Man-(1-&gt;6)]-alpha-D-Man-(1-&gt;6)]-beta-D-Man-(1-&gt;4)-beta-D-GlcNAc-(1-&gt;4)-beta-D-GlcNAc)-L-asparaginyl-[protein] (N-glucan mannose isomer 5A1,2) + 3 beta-D-mannose. The protein operates within protein modification; protein glycosylation. Its function is as follows. Involved in the maturation of Asn-linked oligosaccharides. Progressively trims alpha-1,2-linked mannose residues from Man(9)GlcNAc(2) to produce Man(5)GlcNAc(2). In Emericella nidulans (strain FGSC A4 / ATCC 38163 / CBS 112.46 / NRRL 194 / M139) (Aspergillus nidulans), this protein is Mannosyl-oligosaccharide alpha-1,2-mannosidase 1B (mns1B).